We begin with the raw amino-acid sequence, 570 residues long: Sulfite reductase [NADPH] hemoprotein beta-component (570 aa).

4 residues coordinate [4Fe-4S] cluster: C434, C440, C479, and C483. C483 contacts siroheme.

The protein belongs to the nitrite and sulfite reductase 4Fe-4S domain family. Alpha(8)-beta(8). The alpha component is a flavoprotein, the beta component is a hemoprotein. Requires siroheme as cofactor. It depends on [4Fe-4S] cluster as a cofactor.

The enzyme catalyses hydrogen sulfide + 3 NADP(+) + 3 H2O = sulfite + 3 NADPH + 4 H(+). The protein operates within sulfur metabolism; hydrogen sulfide biosynthesis; hydrogen sulfide from sulfite (NADPH route): step 1/1. In terms of biological role, component of the sulfite reductase complex that catalyzes the 6-electron reduction of sulfite to sulfide. This is one of several activities required for the biosynthesis of L-cysteine from sulfate. This Salmonella dublin (strain CT_02021853) protein is Sulfite reductase [NADPH] hemoprotein beta-component.